A 530-amino-acid chain; its full sequence is UDP-glucuronosyltransferase 1A8 (530 aa).

Positions 1–25 (MAPSGCPPSLPLCVCLFLASGFAQA) are cleaved as a signal peptide. Residues N71, N292, and N430 are each glycosylated (N-linked (GlcNAc...) asparagine). The chain crosses the membrane as a helical span at residues 488 to 504 (VIGFLLAIVLTVVFIVY).

Belongs to the UDP-glycosyltransferase family. As to quaternary structure, homodimers. Homooligomer. Interacts with UGT1A1, UGT1A3, UGT1A4, UGT1A6, UGT1A7, UGT1A8, UGT1A9 and UGT1A10 to form heterodimers.

Its subcellular location is the endoplasmic reticulum membrane. It carries out the reaction glucuronate acceptor + UDP-alpha-D-glucuronate = acceptor beta-D-glucuronoside + UDP + H(+). It catalyses the reaction 17beta-estradiol + UDP-alpha-D-glucuronate = 17beta-estradiol 3-O-(beta-D-glucuronate) + UDP + H(+). The catalysed reaction is 17alpha-estradiol + UDP-alpha-D-glucuronate = 17alpha-estradiol 3-O-(beta-D-glucuronate) + UDP + H(+). The enzyme catalyses estrone + UDP-alpha-D-glucuronate = estrone 3-O-(beta-D-glucuronate) + UDP + H(+). It carries out the reaction 16alpha,17alpha-estriol + UDP-alpha-D-glucuronate = 16alpha,17alpha-estriol 3-O-(beta-D-glucuronate) + UDP + H(+). It catalyses the reaction 2-hydroxy-17beta-estradiol + UDP-alpha-D-glucuronate = 2-hydroxy-17beta-estradiol 3-O-(beta-D-glucuronate) + UDP + H(+). The catalysed reaction is 2-hydroxy-17beta-estradiol + UDP-alpha-D-glucuronate = 17beta-estradiol 2-O-(beta-D-glucuronate) + UDP + H(+). The enzyme catalyses 2-hydroxyestrone + UDP-alpha-D-glucuronate = 2-hydroxyestrone 3-O-(beta-D-glucuronate) + UDP + H(+). It carries out the reaction 4-hydroxy-17beta-estradiol + UDP-alpha-D-glucuronate = 4-hydroxy-17beta-estradiol 3-O-(beta-D-glucuronate) + UDP + H(+). It catalyses the reaction 4-hydroxy-17beta-estradiol + UDP-alpha-D-glucuronate = 17beta-estradiol 4-O-(beta-D-glucuronate) + UDP + H(+). The catalysed reaction is 4-hydroxyestrone + UDP-alpha-D-glucuronate = 4-hydroxyestrone 3-O-(beta-D-glucuronate) + UDP + H(+). The enzyme catalyses 4-hydroxyestrone + UDP-alpha-D-glucuronate = estrone 4-O-(beta-D-glucuronate) + UDP + H(+). It carries out the reaction 2-methoxy-17beta-estradiol + UDP-alpha-D-glucuronate = 2-methoxy-17beta-estradiol 3-O-(beta-D-glucuronate) + UDP + H(+). It catalyses the reaction 2-methoxyestrone + UDP-alpha-D-glucuronate = 2-methoxyestrone 3-O-(beta-D-glucuronate) + UDP + H(+). The catalysed reaction is 4-methoxy-17beta-estradiol + UDP-alpha-D-glucuronate = 4-methoxy-17beta-estradiol 3-O-(beta-D-glucuronate) + UDP + H(+). The enzyme catalyses 4-methoxyestrone + UDP-alpha-D-glucuronate = 4-methoxyestrone 3-O-(beta-D-glucuronate) + UDP + H(+). It carries out the reaction 17beta-hydroxy-5alpha-androstan-3-one + UDP-alpha-D-glucuronate = 5alpha-dihydrotestosterone 17-O-(beta-D-glucuronate) + UDP + H(+). It catalyses the reaction 5alpha-dihydrotestosterone 17-O-(beta-D-glucuronate) + UDP-alpha-D-glucuronate = 5alpha-dihydrotestosterone 17-O-[beta-D-glucuronosyl-(1-&gt;2)-glucuronate] + UDP + H(+). The catalysed reaction is prunetin + UDP-alpha-D-glucuronate = prunetin-4'-O-beta-D-glucuronide + UDP. The enzyme catalyses prunetin + UDP-alpha-D-glucuronate = prunetin-5-O-beta-D-glucuronide + UDP. It carries out the reaction (E)-ferulate + UDP-alpha-D-glucuronate = (E)-4-O-(beta-D-glucuronosyl)-ferulate + UDP + H(+). It catalyses the reaction (E)-ferulate + UDP-alpha-D-glucuronate = (E)-ferulic acid beta-D-glucuronate ester + UDP. The catalysed reaction is candesartan + UDP-alpha-D-glucuronate = candesartan O-beta-D-glucuronoside + UDP. The enzyme catalyses mycophenolate + UDP-alpha-D-glucuronate = mycophenolate 7-O-beta-D-glucuronide + UDP + H(+). Functionally, UDP-glucuronosyltransferase (UGT) that catalyzes phase II biotransformation reactions in which lipophilic substrates are conjugated with glucuronic acid to increase the metabolite's water solubility, thereby facilitating excretion into either the urine or bile. Essential for the elimination and detoxification of drugs, xenobiotics and endogenous compounds. Catalyzes the glucuronidation of endogenous steroid hormones such as androgens and estrogens. Produces dihydrotestosterone (DHT) diglucuronide from the DHT after two subsequent glucoronidation steps. Involved in the glucuronidation of the phytochemical ferulic acid at the phenolic or the carboxylic acid group. Also catalyzes the glucuronidation of the isoflavones genistein, daidzein, glycitein, formononetin, biochanin A and prunetin, which are phytoestrogens with anticancer and cardiovascular properties. Involved in the glucuronidation of the AGTR1 angiotensin receptor antagonist caderastan, a drug which can inhibit the effect of angiotensin II. Also metabolizes mycophenolate, an immunosuppressive agent. This Rattus norvegicus (Rat) protein is UDP-glucuronosyltransferase 1A8.